The sequence spans 248 residues: Ferric nitrobindin-like protein (248 aa).

2 stretches are compositionally biased toward polar residues: residues methionine 1–glycine 25 and glutamine 32–serine 43. Residues methionine 1–leucine 49 form a disordered region. The GXWXGXG signature appears at glycine 82 to glycine 88. Residues serine 118 to glutamate 147 are disordered. The segment covering glutamate 129 to serine 139 has biased composition (acidic residues).

The protein belongs to the nitrobindin family.

The protein is Ferric nitrobindin-like protein of Corynebacterium urealyticum (strain ATCC 43042 / DSM 7109).